The primary structure comprises 346 residues: Methylthioribose-1-phosphate isomerase (346 aa).

Substrate is bound by residues 46 to 48 (RGA), Arg-89, and Gln-196. Asp-237 serves as the catalytic Proton donor. 247–248 (NK) serves as a coordination point for substrate.

The protein belongs to the eIF-2B alpha/beta/delta subunits family. MtnA subfamily.

The catalysed reaction is 5-(methylsulfanyl)-alpha-D-ribose 1-phosphate = 5-(methylsulfanyl)-D-ribulose 1-phosphate. It participates in amino-acid biosynthesis; L-methionine biosynthesis via salvage pathway; L-methionine from S-methyl-5-thio-alpha-D-ribose 1-phosphate: step 1/6. In terms of biological role, catalyzes the interconversion of methylthioribose-1-phosphate (MTR-1-P) into methylthioribulose-1-phosphate (MTRu-1-P). In Geotalea uraniireducens (strain Rf4) (Geobacter uraniireducens), this protein is Methylthioribose-1-phosphate isomerase.